The following is a 307-amino-acid chain: Acetaldehyde dehydrogenase 1 (307 aa).

The active-site Acyl-thioester intermediate is Cys131. NAD(+)-binding positions include 162–170 (SIGPGTRKN) and Asn273.

The protein belongs to the acetaldehyde dehydrogenase family.

The enzyme catalyses acetaldehyde + NAD(+) + CoA = acetyl-CoA + NADH + H(+). In Metapseudomonas furukawaii (Pseudomonas furukawaii), this protein is Acetaldehyde dehydrogenase 1 (salG).